The chain runs to 308 residues: Acetyl-coenzyme A carboxylase carboxyl transferase subunit beta 1 (308 aa).

Positions 25-294 constitute a CoA carboxyltransferase N-terminal domain; the sequence is VWTKCTSCEQ…PMVVSVNESP (270 aa). Residues Cys-29, Cys-32, Cys-48, and Cys-51 each contribute to the Zn(2+) site. The C4-type zinc finger occupies 29-51; it reads CTSCEQVLYHAELERNLEVCPKC. Residues 289-308 form a disordered region; that stretch reads SVNESPNEEPYSVPEADEKG.

The protein belongs to the AccD/PCCB family. Acetyl-CoA carboxylase is a heterohexamer composed of biotin carboxyl carrier protein (AccB), biotin carboxylase (AccC) and two subunits each of ACCase subunit alpha (AccA) and ACCase subunit beta (AccD). Zn(2+) serves as cofactor.

Its subcellular location is the cytoplasm. It catalyses the reaction N(6)-carboxybiotinyl-L-lysyl-[protein] + acetyl-CoA = N(6)-biotinyl-L-lysyl-[protein] + malonyl-CoA. It functions in the pathway lipid metabolism; malonyl-CoA biosynthesis; malonyl-CoA from acetyl-CoA: step 1/1. In terms of biological role, component of the acetyl coenzyme A carboxylase (ACC) complex. Biotin carboxylase (BC) catalyzes the carboxylation of biotin on its carrier protein (BCCP) and then the CO(2) group is transferred by the transcarboxylase to acetyl-CoA to form malonyl-CoA. In Vibrio campbellii (strain ATCC BAA-1116), this protein is Acetyl-coenzyme A carboxylase carboxyl transferase subunit beta 1.